A 2705-amino-acid polypeptide reads, in one-letter code: Teneurin-1 (2705 aa).

2 disordered regions span residues 1-73 (MEQM…STQD) and 135-222 (CLSS…TQDS). Positions 1–299 (MEQMDCKPYQ…KPYRCCNWKC (299 aa)) constitute a Teneurin N-terminal domain. Residues 1–305 (MEQMDCKPYQ…NWKCTALSAT (305 aa)) are Cytoplasmic-facing. Positions 32–46 (DGRKQRQSYDSRETL) are enriched in basic and acidic residues. The Nuclear localization signal (NLS) motif lies at 62-65 (RKRK). Residues 135–147 (CLSSRANSALSLT) show a composition bias toward polar residues. The segment covering 148-157 (DTDHERKSDG) has biased composition (basic and acidic residues). A compositionally biased stretch (pro residues) spans 173–182 (PLPPPPPPPH). Residues 271–278 (PPPRPLPR) carry the Required for interaction with SORBS1 (Ten-1 ICD form) motif. The helical transmembrane segment at 306–326 (AITVTLALLLAYVIAVHLFGL) threads the bilayer. At 327–2705 (TWQLQPVEGQ…FMRQSEIGRR (2379 aa)) the chain is on the extracellular side. N-linked (GlcNAc...) asparagine glycosylation occurs at Asn-414. EGF-like domains lie at 509 to 540 (VLDD…PDCA), 541 to 572 (KDSC…ECDV), 573 to 605 (PEEQ…EICE), 606 to 638 (EEDC…NCET), 639 to 672 (SLPI…SDCS), 673 to 702 (TELC…GPTC), 703 to 734 (EERT…DHCT), and 735 to 769 (IDGC…SGCN). Cystine bridges form between Cys-513–Cys-523, Cys-517–Cys-528, Cys-530–Cys-539, Cys-548–Cys-559, Cys-561–Cys-570, Cys-577–Cys-588, Cys-582–Cys-593, Cys-595–Cys-604, Cys-609–Cys-620, Cys-614–Cys-625, Cys-627–Cys-636, Cys-647–Cys-660, Cys-662–Cys-671, Cys-676–Cys-686, Cys-680–Cys-691, Cys-693–Cys-702, Cys-707–Cys-717, Cys-711–Cys-722, Cys-724–Cys-733, Cys-738–Cys-748, Cys-742–Cys-757, and Cys-759–Cys-768. 2 N-linked (GlcNAc...) asparagine glycosylation sites follow: Asn-878 and Asn-1057. 5 NHL repeats span residues 1167–1192 (LFAP…VRRI), 1202–1246 (LELR…AKSL), 1272–1316 (SHCG…NGMI), 1331–1382 (LSCD…IAGR), and 1461–1504 (CFSG…VSRN). A YD 1 repeat occupies 1514-1533 (YEIASPADQELYQFTINGTH). N-linked (GlcNAc...) asparagine glycosylation is found at Asn-1530 and Asn-1547. YD repeat units follow at residues 1550–1570 (YSGE…VHIR), 1588–1612 (YWLT…ALMT), 1613–1634 (YPGN…TVYE), and 1635–1655 (YDSD…SSFH). 5 N-linked (GlcNAc...) asparagine glycosylation sites follow: Asn-1643, Asn-1679, Asn-1737, Asn-1761, and Asn-1822. YD repeat units lie at residues 1825–1844 (YSHS…EKME), 1845–1865 (YDPS…WSYT), 1866–1884 (YLEK…YIFE), 1885–1905 (YDQS…HALQ), 1913–1929 (YRNI…FIQD), 1930–1949 (VTRD…RRVL), 1950–1969 (YKYS…TQVT), 1972–1992 (YEES…FICT), 1995–2015 (YRQT…EGLV), 2065–2085 (YDLN…FSAN), and 2093–2113 (YEIL…MGRM). N-linked (GlcNAc...) asparagine glycosylation occurs at Asn-2125. YD repeat units lie at residues 2133–2153 (YDRD…WRYS), 2154–2174 (YDLN…LTPL), 2176–2196 (YDLR…DEDG), 2208–2228 (YNSN…TVQY), and 2230–2250 (YDGL…LQFF). Asn-2265 carries N-linked (GlcNAc...) asparagine glycosylation. YD repeat units follow at residues 2276-2293 (YDLQ…GEEY) and 2294-2317 (YVAC…IKEI). Asn-2582 is a glycosylation site (N-linked (GlcNAc...) asparagine).

This sequence belongs to the tenascin family. Teneurin subfamily. In terms of assembly, homodimer; disulfide-linked. Heterodimer with other teneurins. Ten-1 ICD interacts with SORBS1 (via third SH3 domain). Interacts with MBD1 isoform 2. In terms of processing, derives from the plasma membrane form by proteolytic processing. Further proteolytic cleavage may be generated. Post-translationally, derives from the plasma membrane form by proteolytic cleavage and translocates to the nucleus. Expressed in the neurons of the developing visual system and in fetal brain.

Its subcellular location is the cell membrane. It localises to the nucleus. The protein localises to the nucleus speckle. The protein resides in the nucleus matrix. It is found in the cytoplasm. Its subcellular location is the cytoskeleton. Its function is as follows. Involved in neural development, regulating the establishment of proper connectivity within the nervous system. May function as a cellular signal transducer. Functionally, plays a role in the regulation of neuroplasticity in the limbic system. Mediates a rapid reorganization of actin- and tubulin-based cytoskeleton elements with an increase in dendritic arborization and spine density formation of neurons in the hippocampus and amygdala. Induces BDNF transcription inhibition in neurons. Activates the mitogen-activated protein (MAP) kinase 2 (MEK2) and extracellular signal-regulated kinase (ERK) cascade. Induces gene transcription activation. The polypeptide is Teneurin-1 (TENM1) (Gallus gallus (Chicken)).